A 486-amino-acid chain; its full sequence is dTDP-4-dehydro-6-deoxy-alpha-D-glucopyranose 2,3-dehydratase (486 aa).

DTDP-4-dehydro-6-deoxy-alpha-D-glucose is bound by residues Trp66, 149–153 (TRSNY), Ser187, Trp304, Arg367, 383–385 (QCS), 388–389 (NY), and 421–424 (EGGR).

It belongs to the hexose 2,3-dehydratase family. Homodimer.

The enzyme catalyses dTDP-4-dehydro-6-deoxy-alpha-D-glucose = dTDP-3,4-didehydro-2,6-dideoxy-alpha-D-glucose + H2O. Functionally, involved in the biosynthesis of forosamine ((4-dimethylamino)-2,3,4,6-tetradeoxy-alpha-D-threo-hexopyranose), a highly deoxygenated sugar component of several bioactive natural products such as the insecticidal spinosyns A and D. Catalyzes the removal of the hydroxyl group at position C-2 of the hexose ring of dTDP-4-dehydro-6-deoxy-alpha-D-glucopyranose, and the oxidation of the hydroxyl group at position C-3 to form a carbonyl functionality. The product of the reaction, dTDP-2,6-dideoxy-D-glycero-hex-2-enos-4-ulose, is a highly unstable diketosugar, which spontaneously forms dTDP-3,4-didehydro-2,6-dideoxy-alpha-D-glucose. The protein is dTDP-4-dehydro-6-deoxy-alpha-D-glucopyranose 2,3-dehydratase of Saccharopolyspora spinosa.